Reading from the N-terminus, the 346-residue chain is D-alanine--D-alanine ligase (346 aa).

The region spanning 133-327 is the ATP-grasp domain; sequence KLYAKSVGVK…ALADQISLEK (195 aa). 159-211 provides a ligand contact to ATP; sequence LSFPCIIKPARLGSSIGISIVKDEKDLEYAKDVGFEFDNDLVVEEFKNNIKEY. Mg(2+)-binding residues include Asp-284, Glu-296, and Asn-298.

It belongs to the D-alanine--D-alanine ligase family. Mg(2+) serves as cofactor. Requires Mn(2+) as cofactor.

Its subcellular location is the cytoplasm. It catalyses the reaction 2 D-alanine + ATP = D-alanyl-D-alanine + ADP + phosphate + H(+). The protein operates within cell wall biogenesis; peptidoglycan biosynthesis. In terms of biological role, cell wall formation. The protein is D-alanine--D-alanine ligase of Campylobacter jejuni subsp. jejuni serotype O:23/36 (strain 81-176).